Consider the following 509-residue polypeptide: Fumarate hydratase, mitochondrial (509 aa).

The N-terminal 43 residues, 1-43 (MYRSARSLHRFSASLSDLRAAQRSIKARNVCPAPGLRHQTVRM), are a transit peptide targeting the mitochondrion. Substrate is bound by residues 144 to 146 (SGT), 175 to 178 (HPND), 185 to 187 (SSN), and T233. The active-site Proton donor/acceptor is the H234. S364 is an active-site residue. Residues S365 and 370 to 372 (KVN) each bind substrate.

This sequence belongs to the class-II fumarase/aspartase family. Fumarase subfamily. In terms of assembly, homotetramer.

Its subcellular location is the mitochondrion. The protein resides in the cytoplasm. It is found in the cytosol. The protein localises to the nucleus. It localises to the chromosome. The enzyme catalyses (S)-malate = fumarate + H2O. Its pathway is carbohydrate metabolism; tricarboxylic acid cycle; (S)-malate from fumarate: step 1/1. Functionally, catalyzes the reversible stereospecific interconversion of fumarate to L-malate. Experiments in other species have demonstrated that specific isoforms of this protein act in defined pathways and favor one direction over the other. Catalyzes the hydration of fumarate to L-malate in the tricarboxylic acid (TCA) cycle to facilitate a transition step in the production of energy in the form of NADH. In terms of biological role, catalyzes the dehydration of L-malate to fumarate. Fumarate metabolism in the cytosol plays a role during urea cycle and arginine metabolism; fumarate being a by-product of the urea cycle and amino-acid catabolism. Also plays a role in DNA repair by promoting non-homologous end-joining (NHEJ). In response to DNA damage translocates to the nucleus and accumulates at DNA double-strand breaks (DSBs): acts by catalyzing formation of fumarate. The protein is Fumarate hydratase, mitochondrial of Danio rerio (Zebrafish).